Here is a 142-residue protein sequence, read N- to C-terminus: Large ribosomal subunit protein uL13 (142 aa).

This sequence belongs to the universal ribosomal protein uL13 family. As to quaternary structure, part of the 50S ribosomal subunit.

This protein is one of the early assembly proteins of the 50S ribosomal subunit, although it is not seen to bind rRNA by itself. It is important during the early stages of 50S assembly. The protein is Large ribosomal subunit protein uL13 of Stutzerimonas stutzeri (strain A1501) (Pseudomonas stutzeri).